A 317-amino-acid chain; its full sequence is Probable F-box protein At2g36090 (317 aa).

In terms of domain architecture, F-box spans I25–R74.

This chain is Probable F-box protein At2g36090, found in Arabidopsis thaliana (Mouse-ear cress).